We begin with the raw amino-acid sequence, 240 residues long: Protein CDV3 homolog A (240 aa).

Basic and acidic residues predominate over residues 1–15 (MAEPQEKSLDDFFAK). Residues 1–204 (MAEPQEKSLD…TESRREKEME (204 aa)) form a disordered region. At Ala2 the chain carries N-acetylalanine. The span at 27-52 (SGSAAGSRGSARPPDGAPSSSSSMSG) shows a compositional bias: low complexity. Residues 57–73 (VKKEKSGKSDNPDQLQE) show a composition bias toward basic and acidic residues. 2 stretches are compositionally biased toward polar residues: residues 127-141 (DKSSGPWNKTSQAQA) and 181-192 (SDTQFPSLQATA). The span at 193–204 (KHTESRREKEME) shows a compositional bias: basic and acidic residues.

It belongs to the CDV3 family.

The protein resides in the cytoplasm. The chain is Protein CDV3 homolog A (cdv3-a) from Xenopus laevis (African clawed frog).